The chain runs to 151 residues: Superoxide dismutase [Cu-Zn] A (151 aa).

Residue C6 is the site of S-palmitoyl cysteine attachment. Positions 45, 47, and 62 each coordinate Cu cation. An intrachain disulfide couples C56 to C144. 4 residues coordinate Zn(2+): H62, H70, H79, and D82. H118 provides a ligand contact to Cu cation.

Belongs to the Cu-Zn superoxide dismutase family. Homodimer, and heterodimer of Superoxide dismutase [Cu-Zn] A and B. It depends on Cu cation as a cofactor. The cofactor is Zn(2+).

The protein resides in the cytoplasm. The protein localises to the nucleus. The catalysed reaction is 2 superoxide + 2 H(+) = H2O2 + O2. Its function is as follows. Destroys radicals which are normally produced within the cells and which are toxic to biological systems. The protein is Superoxide dismutase [Cu-Zn] A (sod1-a) of Xenopus laevis (African clawed frog).